Here is a 551-residue protein sequence, read N- to C-terminus: Structure-specific endonuclease subunit MUS81 (551 aa).

Over residues 84-93 the composition is skewed to basic and acidic residues; that stretch reads HRTSGGDHAP. The interval 84 to 130 is disordered; sequence HRTSGGDHAPDSPSGENSPAPQGRLAEVQDSSMPVPAQPKAGGSGSY. Phosphoserine occurs at positions 95 and 101. The interaction with BLM stretch occupies residues 125-244; the sequence is GGSGSYWPAR…PGEETAVPGA (120 aa). The segment at 131-230 is winged helix domain (WHD); critical for endonuclease activity; sequence WPARHSGARV…GLSLLNVGIG (100 aa). An ERCC4 domain is found at 270–372; it reads LLCVDIGETR…RRVYLVEEHG (103 aa). Catalysis depends on residues Asp-274, Glu-277, and Asp-307. Mg(2+) is bound by residues Asp-274, Glu-277, Asp-307, Glu-333, and Arg-334. The helix-hairpin-helix (2HhH); involved in DNA recognition and bending stretch occupies residues 471–545; it reads VREVFARQLM…LSRTLSQLYC (75 aa).

This sequence belongs to the XPF family. Part of the heterodimeric DNA structure-specific endonuclease complex MUS81-EME1. Part of the heterodimeric DNA structure-specific endonuclease complex MUS81-EME2. Interacts with BLM; may stimulate the endonuclease activity of MUS81. Interacts with SLX4/BTBD12; this interaction is direct and links the MUS81-EME1 complex to SLX4, which may coordinate the action of the structure-specific endonuclease during DNA repair. Interacts with DCLRE1B/Apollo. Interacts with RECQL5; this interaction stimulates mitotic DNA synthesis. Interacts with CHEK2. The cofactor is Mg(2+). In terms of tissue distribution, widely expressed.

It is found in the nucleus. It localises to the nucleolus. In terms of biological role, catalytic subunit of two functionally distinct, structure-specific, heterodimeric DNA endonucleases MUS81-EME1 and MUS81-EME2 that are involved in the maintenance of genome stability. Both endonucleases have essentially the same substrate specificity though MUS81-EME2 is more active than its MUS81-EME1 counterpart. Both cleave 3'-flaps and nicked Holliday junctions, and exhibit limited endonuclease activity with 5' flaps and nicked double-stranded DNAs. MUS81-EME2 which is active during the replication of DNA is more specifically involved in replication fork processing. Replication forks frequently encounter obstacles to their passage, including DNA base lesions, DNA interstrand cross-links, difficult-to-replicate sequences, transcription bubbles, or tightly bound proteins. One mechanism for the restart of a stalled replication fork involves nucleolytic cleavage mediated by the MUS81-EME2 endonuclease. By acting upon the stalled fork, MUS81-EME2 generates a DNA double-strand break (DSB) that can be repaired by homologous recombination, leading to the restoration of an active fork. MUS81-EME2 could also function in telomere maintenance. MUS81-EME1, on the other hand, is active later in the cell cycle and functions in the resolution of mitotic recombination intermediates including the Holliday junctions, the four-way DNA intermediates that form during homologous recombination. The sequence is that of Structure-specific endonuclease subunit MUS81 from Homo sapiens (Human).